The following is a 37-amino-acid chain: Large ribosomal subunit protein bL36c (37 aa).

The protein belongs to the bacterial ribosomal protein bL36 family.

Its subcellular location is the plastid. The protein localises to the chloroplast. This is Large ribosomal subunit protein bL36c (rpl36) from Anthoceros angustus (Hornwort).